Consider the following 464-residue polypeptide: Synaptosomal-associated protein 47 (464 aa).

Positions 20 to 42 (GRLWDSSGVPQRQKRPGPWRTQT) are disordered. T-SNARE coiled-coil homology domains are found at residues 154–216 (VADA…LTEL) and 401–463 (TSLP…MKRL).

Belongs to the SVAP1 family. Forms a complex containing SNAP47, VAMP2 and STX1A. Associates with the BLOC-1 complex. Interacts with BLOC1S6.

It is found in the endomembrane system. The protein localises to the cytoplasm. Its subcellular location is the perinuclear region. Its function is as follows. Plays a role in intracellular membrane fusion. This chain is Synaptosomal-associated protein 47 (SNAP47), found in Homo sapiens (Human).